The following is a 282-amino-acid chain: 4-diphosphocytidyl-2-C-methyl-D-erythritol kinase (282 aa).

Lys-12 is an active-site residue. Residue 95–105 (PMGGGIGGGSS) coordinates ATP. The active site involves Asp-137.

This sequence belongs to the GHMP kinase family. IspE subfamily.

The catalysed reaction is 4-CDP-2-C-methyl-D-erythritol + ATP = 4-CDP-2-C-methyl-D-erythritol 2-phosphate + ADP + H(+). It participates in isoprenoid biosynthesis; isopentenyl diphosphate biosynthesis via DXP pathway; isopentenyl diphosphate from 1-deoxy-D-xylulose 5-phosphate: step 3/6. Functionally, catalyzes the phosphorylation of the position 2 hydroxy group of 4-diphosphocytidyl-2C-methyl-D-erythritol. The chain is 4-diphosphocytidyl-2-C-methyl-D-erythritol kinase from Pseudomonas paraeruginosa (strain DSM 24068 / PA7) (Pseudomonas aeruginosa (strain PA7)).